The sequence spans 458 residues: Argininosuccinate lyase (458 aa).

It belongs to the lyase 1 family. Argininosuccinate lyase subfamily.

The protein localises to the cytoplasm. The enzyme catalyses 2-(N(omega)-L-arginino)succinate = fumarate + L-arginine. It participates in amino-acid biosynthesis; L-arginine biosynthesis; L-arginine from L-ornithine and carbamoyl phosphate: step 3/3. The chain is Argininosuccinate lyase from Pseudoalteromonas atlantica (strain T6c / ATCC BAA-1087).